A 67-amino-acid chain; its full sequence is MLNLKILALGIAVLGVSLGEGILVANIAKSAARQPEMYGKLQTLMIMGVAFIEGTFFVLLASTFFVG.

2 helical membrane passes run 6-26 (ILAL…LVAN) and 46-66 (IMGV…TFFV).

This sequence belongs to the ATPase C chain family. As to quaternary structure, F-type ATPases have 2 components, F(1) - the catalytic core - and F(0) - the membrane proton channel. F(1) has five subunits: alpha(3), beta(3), gamma(1), delta(1), epsilon(1). F(0) has three main subunits: a(1), b(2) and c(10-14). The alpha and beta chains form an alternating ring which encloses part of the gamma chain. F(1) is attached to F(0) by a central stalk formed by the gamma and epsilon chains, while a peripheral stalk is formed by the delta and b chains.

It is found in the cell membrane. F(1)F(0) ATP synthase produces ATP from ADP in the presence of a proton or sodium gradient. F-type ATPases consist of two structural domains, F(1) containing the extramembraneous catalytic core and F(0) containing the membrane proton channel, linked together by a central stalk and a peripheral stalk. During catalysis, ATP synthesis in the catalytic domain of F(1) is coupled via a rotary mechanism of the central stalk subunits to proton translocation. Its function is as follows. Key component of the F(0) channel; it plays a direct role in translocation across the membrane. A homomeric c-ring of between 10-14 subunits forms the central stalk rotor element with the F(1) delta and epsilon subunits. The protein is ATP synthase subunit c of Streptococcus mutans serotype c (strain ATCC 700610 / UA159).